The sequence spans 264 residues: Thymidylate synthase (264 aa).

Arg-21 provides a ligand contact to dUMP. His-51 is a (6R)-5,10-methylene-5,6,7,8-tetrahydrofolate binding site. 126-127 provides a ligand contact to dUMP; the sequence is RR. The active-site Nucleophile is Cys-146. DUMP-binding positions include 166-169, Asn-177, and 207-209; these read RSGD and HLY. Asp-169 contributes to the (6R)-5,10-methylene-5,6,7,8-tetrahydrofolate binding site. Ala-263 is a (6R)-5,10-methylene-5,6,7,8-tetrahydrofolate binding site.

It belongs to the thymidylate synthase family. Bacterial-type ThyA subfamily. In terms of assembly, homodimer.

The protein resides in the cytoplasm. It catalyses the reaction dUMP + (6R)-5,10-methylene-5,6,7,8-tetrahydrofolate = 7,8-dihydrofolate + dTMP. It functions in the pathway pyrimidine metabolism; dTTP biosynthesis. In terms of biological role, catalyzes the reductive methylation of 2'-deoxyuridine-5'-monophosphate (dUMP) to 2'-deoxythymidine-5'-monophosphate (dTMP) while utilizing 5,10-methylenetetrahydrofolate (mTHF) as the methyl donor and reductant in the reaction, yielding dihydrofolate (DHF) as a by-product. This enzymatic reaction provides an intracellular de novo source of dTMP, an essential precursor for DNA biosynthesis. This Xanthomonas campestris pv. campestris (strain 8004) protein is Thymidylate synthase.